The following is a 154-amino-acid chain: MutT-like protein (154 aa).

The Nudix hydrolase domain maps to 15–136 (PLHSVSVAGV…YAIRLLDALD (122 aa)). Gly48, Glu63, Glu66, and Glu67 together coordinate Mg(2+). The short motif at 48-69 (GVLELDETPETGVAREVWEETG) is the Nudix box element.

This sequence belongs to the Nudix hydrolase family.

The chain is MutT-like protein from Streptomyces ambofaciens.